Consider the following 22-residue polypeptide: MICOS complex subunit MIC60 (22 aa).

The protein belongs to the MICOS complex subunit Mic60 family. As to quaternary structure, component of the mitochondrial contact site and cristae organizing system (MICOS) complex, composed of at least MICOS10/MIC10, CHCHD3/MIC19, CHCHD6/MIC25, APOOL/MIC27, IMMT/MIC60, APOO/MIC23/MIC26 and MICOS13/MIC13. This complex was also known under the names MINOS or MitOS complex. The MICOS complex associates with mitochondrial outer membrane proteins SAMM50, MTX1 and MTX2 (together described as components of the mitochondrial outer membrane sorting assembly machinery (SAM) complex) and DNAJC11, mitochondrial inner membrane protein TMEM11 and with HSPA9. The MICOS and SAM complexes together with DNAJC11 are part of a large protein complex spanning both membranes termed the mitochondrial intermembrane space bridging (MIB) complex. Interacts with HSPA1A/HSPA1B and OPA1, preferentially with the soluble OPA1 form. Interacts with MICOS13/MIC13, MICOS10/MIC10, CHCHD3/MIC19, CHCHD6/MIC25, SAMM50 and TMEM11. Interacts with APOO/MIC23/MIC26 and APOOL/MIC27. Interacts with ARMC1. Interacts with ARMC12.

It localises to the mitochondrion inner membrane. It is found in the mitochondrion. In terms of biological role, component of the MICOS complex, a large protein complex of the mitochondrial inner membrane that plays crucial roles in the maintenance of crista junctions, inner membrane architecture, and formation of contact sites to the outer membrane. Plays an important role in the maintenance of the MICOS complex stability and the mitochondrial cristae morphology. This Mesocricetus auratus (Golden hamster) protein is MICOS complex subunit MIC60.